The sequence spans 493 residues: MNEIIRSDAATLAARIAAKELSSVEATQACLDQIAATDERYHAFLHVAADEALGAAAVVDEAVAAGERLPSPLAGVPLALKDVFTTVDMPTTCGSKILQGWRSPYDATVTTKLRAAGIPILGKTNMDEFAMGSSTENSAYGPTRNPWNVERVPGGSGGGSAAALAAFQAPLAIGSDTGGSIRQPAALTATVGVKPTYGTVSRYGLVACASSLDQGGPCARTVLDTALLHQVIAGHDIRDSTSVDAPVPDVVGAARAGAAGDLKGVRVGVVKQLRGEGYQPGVLASFEAAVEQLTALGAEVSEVDCPHFEYALAAYYLILPSEVSSNLARFDAMRYGLRIGDDGSHSAEEVMALTRAAGFGPEVKRRIMIGTYALSAGYYDAYYNQAQKVRTLIARDLDAAYESVDVVVSPATPTTAFGLGEKVDDPLAMYLFDLCTLPLNLAGHCGMSVPSGLSPDDDLPVGLQIMAPALADDRLYRVGAAYEAARGPLRSAI.

Active-site charge relay system residues include Lys81 and Ser156. Ser180 (acyl-ester intermediate) is an active-site residue.

The protein belongs to the amidase family. GatA subfamily. As to quaternary structure, heterotrimer of A, B and C subunits.

It catalyses the reaction L-glutamyl-tRNA(Gln) + L-glutamine + ATP + H2O = L-glutaminyl-tRNA(Gln) + L-glutamate + ADP + phosphate + H(+). Its function is as follows. Allows the formation of correctly charged Gln-tRNA(Gln) through the transamidation of misacylated Glu-tRNA(Gln) in organisms which lack glutaminyl-tRNA synthetase. The reaction takes place in the presence of glutamine and ATP through an activated gamma-phospho-Glu-tRNA(Gln). The protein is Glutamyl-tRNA(Gln) amidotransferase subunit A of Mycobacterium avium (strain 104).